The chain runs to 622 residues: Solute carrier family 2, facilitated glucose transporter member 12 (622 aa).

The tract at residues 1 to 26 (MVPVENTEGPNLLNQKGREAETEGSC) is disordered. Over 1–44 (MVPVENTEGPNLLNQKGREAETEGSCGASGGGHPACAGGPSMFT) the chain is Cytoplasmic. The helical transmembrane segment at 45–65 (FLTSVTAAISGLLVGYELGLI) threads the bilayer. Residues 66-84 (SGALLQIRTLLALTCHEQE) lie on the Extracellular side of the membrane. Residues 85–105 (MVVSSLLIGAFLASLTGGVLI) form a helical membrane-spanning segment. Residues 106–111 (DRYGRR) lie on the Cytoplasmic side of the membrane. A helical transmembrane segment spans residues 112–132 (LAIILSSCLLGLGSLVLIMSL). Residues 133-141 (SYTLLIMGR) are Extracellular-facing. The helical transmembrane segment at 142-162 (VAIGVSISLSSIATCVYIAEI) threads the bilayer. The Cytoplasmic portion of the chain corresponds to 163-168 (APQHRR). Residues 169–189 (GLLVSLNELMIVTGILFAYIS) traverse the membrane as a helical segment. Over 190–201 (NYAFANISNGWK) the chain is Extracellular. The N-linked (GlcNAc...) asparagine glycan is linked to Asn195. Residues 202–222 (YMFGLVIPLGVLQAIAMYFLP) form a helical membrane-spanning segment. At 223 to 282 (PSPRFLVMKGQEESAGKVLRKLRVISDTTEELTLIKSSLKDEYQYSFWDLFRSKDNMRTR) the chain is on the cytoplasmic side. Residues 283–303 (ILIGLTLVFFVQTTGQPNILF) form a helical membrane-spanning segment. The Extracellular portion of the chain corresponds to 304–321 (YASTVLKSVGFQSNEAAS). Residues 322–342 (LASTGVGVVKVVSTIPATLLV) traverse the membrane as a helical segment. Residues 343 to 349 (DHIGSKT) lie on the Cytoplasmic side of the membrane. Residues 350-370 (FLCIGSSVMSASLLTMGIVNL) traverse the membrane as a helical segment. At 371–471 (NINMNFTNIC…PAAYKWLSLA (101 aa)) the chain is on the extracellular side. Asn375, Asn387, Asn400, and Asn405 each carry an N-linked (GlcNAc...) asparagine glycan. The chain crosses the membrane as a helical span at residues 472–492 (SLLVYVAAFSIGLGPMPWLVL). The Cytoplasmic portion of the chain corresponds to 493-503 (SEIFPGGIRGR). Residues 504–524 (AMALTSSMNWGVNLLISLTFL) traverse the membrane as a helical segment. Residues 525-533 (TVTDLIGLS) lie on the Extracellular side of the membrane. The helical transmembrane segment at 534–554 (WVCFIYTIMSLASLAFVVLFI) threads the bilayer. The Cytoplasmic portion of the chain corresponds to 555-622 (PETKGCSLEQ…GQSQRPSPDT (68 aa)).

Belongs to the major facilitator superfamily. Sugar transporter (TC 2.A.1.1) family. Glucose transporter subfamily. As to expression, expressed in skeletal muscle, heart, brain, kidney, spleen, adipose tissues and to a lesser extent in small intestine and lung.

The protein localises to the cell membrane. Its subcellular location is the endomembrane system. The protein resides in the cytoplasm. It localises to the perinuclear region. It catalyses the reaction D-glucose(out) = D-glucose(in). Functionally, insulin-independent facilitative glucose transporter. This Mus musculus (Mouse) protein is Solute carrier family 2, facilitated glucose transporter member 12.